The primary structure comprises 314 residues: Transcription factor TCP20 (314 aa).

Disordered regions lie at residues 1–91 and 295–314; these read MDPK…RGRR and NHEEHQQESGEKDDSQGSGR. Basic and acidic residues-rich tracts occupy residues 38-49 and 77-89; these read DENRKPTTEIKD and SNKDRHTKVEGRG. One can recognise a TCP domain in the interval 78 to 132; the sequence is NKDRHTKVEGRGRRIRMPALCAARIFQLTRELGHKSDGETIQWLLQQAEPSIIAA.

As to quaternary structure, interacts with PURA1. Interacts with SPL.

It is found in the nucleus. In terms of biological role, transcription factor that binds to the site II motif (3'-TGGGCC/T-5') in the promoter of PCNA-2 and to 3'-GCCCG/A-5' elements in the promoters of cyclin CYCB1-1 and ribosomal protein genes. This chain is Transcription factor TCP20 (TCP20), found in Arabidopsis thaliana (Mouse-ear cress).